The primary structure comprises 608 residues: UvrABC system protein C (608 aa).

One can recognise a GIY-YIG domain in the interval 13–91 (HKPGVYIMHD…IKKNSPKYNI (79 aa)). A UVR domain is found at 202-237 (DELTKKLTDKMMAASKNLNFELAAKLRDSITNIQVI).

Belongs to the UvrC family. In terms of assembly, interacts with UvrB in an incision complex.

The protein localises to the cytoplasm. In terms of biological role, the UvrABC repair system catalyzes the recognition and processing of DNA lesions. UvrC both incises the 5' and 3' sides of the lesion. The N-terminal half is responsible for the 3' incision and the C-terminal half is responsible for the 5' incision. This Finegoldia magna (strain ATCC 29328 / DSM 20472 / WAL 2508) (Peptostreptococcus magnus) protein is UvrABC system protein C.